The sequence spans 684 residues: Glycine--tRNA ligase beta subunit (684 aa).

Belongs to the class-II aminoacyl-tRNA synthetase family. Tetramer of two alpha and two beta subunits.

Its subcellular location is the cytoplasm. It catalyses the reaction tRNA(Gly) + glycine + ATP = glycyl-tRNA(Gly) + AMP + diphosphate. The protein is Glycine--tRNA ligase beta subunit of Pseudomonas entomophila (strain L48).